Reading from the N-terminus, the 211-residue chain is Ribosomal RNA small subunit methyltransferase G (211 aa).

Residues Gly73, Ile126–Glu127, and Arg142 each bind S-adenosyl-L-methionine.

This sequence belongs to the methyltransferase superfamily. RNA methyltransferase RsmG family.

It localises to the cytoplasm. The catalysed reaction is guanosine(527) in 16S rRNA + S-adenosyl-L-methionine = N(7)-methylguanosine(527) in 16S rRNA + S-adenosyl-L-homocysteine. Functionally, specifically methylates the N7 position of guanine in position 527 of 16S rRNA. In Methylorubrum populi (strain ATCC BAA-705 / NCIMB 13946 / BJ001) (Methylobacterium populi), this protein is Ribosomal RNA small subunit methyltransferase G.